Here is a 555-residue protein sequence, read N- to C-terminus: CTP synthase (555 aa).

The interval 1-265 (MTRYIFITGG…GNRVCEKLNI (265 aa)) is amidoligase domain. S13 lines the CTP pocket. S13 lines the UTP pocket. Residues 14–19 (SLGKGI) and D71 each bind ATP. Mg(2+) is bound by residues D71 and E139. CTP contacts are provided by residues 146 to 148 (DIE), 186 to 191 (KTKPTQ), and K222. Residues 186-191 (KTKPTQ) and K222 each bind UTP. Residues 290–541 (TVAVVGKYVD…IKAGLAAKEA (252 aa)) enclose the Glutamine amidotransferase type-1 domain. G351 provides a ligand contact to L-glutamine. The active-site Nucleophile; for glutamine hydrolysis is C378. Residues 379 to 382 (LGMQ), E402, and R469 each bind L-glutamine. Catalysis depends on residues H514 and E516.

It belongs to the CTP synthase family. In terms of assembly, homotetramer.

It catalyses the reaction UTP + L-glutamine + ATP + H2O = CTP + L-glutamate + ADP + phosphate + 2 H(+). The catalysed reaction is L-glutamine + H2O = L-glutamate + NH4(+). The enzyme catalyses UTP + NH4(+) + ATP = CTP + ADP + phosphate + 2 H(+). The protein operates within pyrimidine metabolism; CTP biosynthesis via de novo pathway; CTP from UDP: step 2/2. Allosterically activated by GTP, when glutamine is the substrate; GTP has no effect on the reaction when ammonia is the substrate. The allosteric effector GTP functions by stabilizing the protein conformation that binds the tetrahedral intermediate(s) formed during glutamine hydrolysis. Inhibited by the product CTP, via allosteric rather than competitive inhibition. In terms of biological role, catalyzes the ATP-dependent amination of UTP to CTP with either L-glutamine or ammonia as the source of nitrogen. Regulates intracellular CTP levels through interactions with the four ribonucleotide triphosphates. The protein is CTP synthase of Coxiella burnetii (strain CbuG_Q212) (Coxiella burnetii (strain Q212)).